The chain runs to 297 residues: uncharacterized protein (297 aa).

Positions Asn267 to Ala297 are disordered. Positions Arg288–Ala297 are enriched in basic and acidic residues.

This is an uncharacterized protein from Treponema pallidum (strain Nichols).